A 301-amino-acid chain; its full sequence is Probable alpha-L-glutamate ligase (301 aa).

Residues 104-287 (LQLLSRKGIG…VAGMIIQYLE (184 aa)) form the ATP-grasp domain. Residues Lys-141, 178 to 179 (EY), Asp-187, and 211 to 213 (RSN) contribute to the ATP site. Positions 248, 260, and 262 each coordinate Mg(2+). The Mn(2+) site is built by Asp-248, Glu-260, and Asn-262.

It belongs to the RimK family. The cofactor is Mg(2+). Mn(2+) serves as cofactor.

The chain is Probable alpha-L-glutamate ligase from Ectopseudomonas mendocina (strain ymp) (Pseudomonas mendocina).